The primary structure comprises 151 residues: MSNEENQQKVVVSLEDLLAQADALKKYIDYLQKTYAELQDNIMSIDSSLQALKELQNSQELLMVGDKRGNVIFKVQGIDKAKVLVHLGLEYYAEVDPDFATKVLNDKKSELSNVLSNVEKELAKSLEAYKEIADILNQAQQQLQAQQNKGG.

This sequence belongs to the prefoldin subunit alpha family. Heterohexamer of two alpha and four beta subunits.

The protein resides in the cytoplasm. Functionally, molecular chaperone capable of stabilizing a range of proteins. Seems to fulfill an ATP-independent, HSP70-like function in archaeal de novo protein folding. This chain is Prefoldin subunit alpha, found in Sulfurisphaera tokodaii (strain DSM 16993 / JCM 10545 / NBRC 100140 / 7) (Sulfolobus tokodaii).